A 50-amino-acid polypeptide reads, in one-letter code: Thrombin-like enzyme BpirSP27 (50 aa).

Residues 1 to 50 (VVGGDECNINEHRSLVAIFNSTGFFCSGILLNQEWVLTASHCDSTNFQMK) enclose the Peptidase S1 domain. N-linked (GlcNAc...) asparagine glycosylation is present at Asn-20. Cys-26 and Cys-42 form a disulfide bridge. Catalysis depends on His-41, which acts as the Charge relay system.

Belongs to the peptidase S1 family. Snake venom subfamily. As to quaternary structure, monomer. N-glycosylated. In terms of tissue distribution, expressed by the venom gland.

It is found in the secreted. Inhibited by serine protease inhibitors PMSF, benzamidine, leupeptin and aprotinin, as well as by copper (Cu2+) and manganese (Mn2+) ions. Not inhibited by metalloprotease inhibitors EDTA, EGTA and 1,10-phenanthroline, as well as by barium (Ba2+) and calcium ion (Ca2+). Functionally, snake venom serine protease that interferes with the hemostatic system of the prey. It preferentially degrades the Bbeta chain (FGB) of fibrinogen, with minor effects on the Aalpha chain (FGA). It presents a lower ability to degrade fibrin clots than BpirSP41. It hydrolyzes chromogenic substrates S-2238 (used for testing thrombin activity), S-2222 (factor Xa), S-2266 (glandular kallikrein and factor XIa), S-2302 (plasma kallikrein, factor XIa and XIIa), and S-2251 (plasmin). It shows a decrease in the clotting time of human plasma in the presence of increasing doses of the enzyme. Its minimum coagulant dose (MCD) is 3.5 ug. It also promotes platelet aggregation in a concentration-dependent manner in the presence or absence of calcium. It also shows 20% inhibition of the hemolytic activity promoted by the complement pathways and possess only a minor role in the induction of edema and pain in rat. The polypeptide is Thrombin-like enzyme BpirSP27 (Bothrops pirajai (Piraja's lancehead)).